Consider the following 498-residue polypeptide: Ammonium transporter 1 member 1 (498 aa).

A run of 11 helical transmembrane segments spans residues 39–59 (LLFS…LCAG), 74–94 (VLDA…FAFG), 120–140 (FFLF…GSIA), 148–168 (YLIY…HWIW), 192–212 (FAGS…GALI), 236–256 (LVVL…PGSF), 274–296 (SGVG…TTLF), 307–327 (VVDV…GCSV), 331–351 (WAAI…NALA), 360–380 (LEAA…TALF), and 411–431 (VIQI…LFYG).

Belongs to the ammonia transporter channel (TC 1.A.11.2) family. As to expression, expressed in roots and shoots.

Its subcellular location is the membrane. Ammonium transporter probably involved in ammonium uptake from the soil. The chain is Ammonium transporter 1 member 1 (AMT1-1) from Oryza sativa subsp. japonica (Rice).